We begin with the raw amino-acid sequence, 359 residues long: Chorismate synthase (359 aa).

Position 47 (R47) interacts with NADP(+). FMN contacts are provided by residues 123–125, G283, 298–302, and R326; these read RSS and KPTSS.

Belongs to the chorismate synthase family. Homotetramer. The cofactor is FMNH2.

The catalysed reaction is 5-O-(1-carboxyvinyl)-3-phosphoshikimate = chorismate + phosphate. Its pathway is metabolic intermediate biosynthesis; chorismate biosynthesis; chorismate from D-erythrose 4-phosphate and phosphoenolpyruvate: step 7/7. Functionally, catalyzes the anti-1,4-elimination of the C-3 phosphate and the C-6 proR hydrogen from 5-enolpyruvylshikimate-3-phosphate (EPSP) to yield chorismate, which is the branch point compound that serves as the starting substrate for the three terminal pathways of aromatic amino acid biosynthesis. This reaction introduces a second double bond into the aromatic ring system. In Chlamydia felis (strain Fe/C-56) (Chlamydophila felis), this protein is Chorismate synthase.